Consider the following 248-residue polypeptide: Sugar fermentation stimulation protein homolog (248 aa).

The protein belongs to the SfsA family.

The protein is Sugar fermentation stimulation protein homolog of Methylorubrum extorquens (strain CM4 / NCIMB 13688) (Methylobacterium extorquens).